A 315-amino-acid polypeptide reads, in one-letter code: uncharacterized protein (315 aa).

Belongs to the asfivirus C315R family.

This is an uncharacterized protein from Ornithodoros (relapsing fever ticks).